Reading from the N-terminus, the 382-residue chain is Na(+)/H(+) antiporter NhaA 2 (382 aa).

10 helical membrane passes run 11–31 (FSVP…LDPA), 45–65 (LSFH…IAAV), 91–111 (LGGV…VGLP), 116–136 (GWGI…RMVF), 145–165 (YLLL…ALFY), 171–191 (PVVA…WGLG), 197–214 (SYWP…IGLH), 287–307 (WLVL…FGLL), 324–344 (LLVA…VSGS), and 353–373 (AAAK…MLLG).

Belongs to the NhaA Na(+)/H(+) (TC 2.A.33) antiporter family.

The protein localises to the cell inner membrane. The enzyme catalyses Na(+)(in) + 2 H(+)(out) = Na(+)(out) + 2 H(+)(in). Na(+)/H(+) antiporter that extrudes sodium in exchange for external protons. The polypeptide is Na(+)/H(+) antiporter NhaA 2 (Pelobacter propionicus (strain DSM 2379 / NBRC 103807 / OttBd1)).